Reading from the N-terminus, the 437-residue chain is Putative ankyrin repeat protein FPV014 (437 aa).

7 ANK repeats span residues 32 to 61 (YGCS…NPDL), 65 to 94 (STPT…DPDN), 99 to 128 (ESRT…DAED), 131 to 160 (RFNC…RINS), 164 to 195 (GSVY…DVED), 197 to 226 (LSFS…SVDV), and 230 to 259 (CGRT…DTSV).

The sequence is that of Putative ankyrin repeat protein FPV014 from Fowlpox virus (strain NVSL) (FPV).